The following is a 374-amino-acid chain: MGIKGLTALISDEAPGAIKEMEIKTYFGRKVAIDASMSLYQFLIAVRQNDGQQLMTESGETTSHLLGFFYRTLRMIDYGIKPMYVFDGTPPDLKKELLQKRFGRREEAREQEEEQKDVADAEKMDQLARRQVRPTRQHNEEVRHLLKLMGIPCVIAPSEAEAQCAELARAGKVYAAGSEDMDTLTFGTPILLKHLTASEQKKLPVHQVDLAKALEGLQMTMAQFIDLCILLGCDYLDPIKGIGPKTALKLIREHKTLENVVHHLKEDGKKSVQIPDHWPFQEARKIFESPDVQKGVDLDLKWEAPDVEAMVKFLCQDKGFSEDRVRKGCEKLQKSLSQKQQGRLDGFFTVKPGSAPPKRKAEDDKKNVKKKGKK.

An N-domain region spans residues 1 to 105; sequence MGIKGLTALI…ELLQKRFGRR (105 aa). Asp-34 is a binding site for Mg(2+). DNA contacts are provided by Arg-47 and Arg-71. Asp-87 serves as a coordination point for Mg(2+). Residues 103-122 form a disordered region; the sequence is GRREEAREQEEEQKDVADAE. Positions 123 to 254 are I-domain; sequence KMDQLARRQV…KTALKLIREH (132 aa). Residues Glu-159, Glu-161, Asp-180, and Asp-182 each contribute to the Mg(2+) site. A DNA-binding site is contributed by Glu-159. DNA is bound by residues Gly-232 and Asp-234. Residue Asp-234 participates in Mg(2+) binding. The tract at residues 335-374 is disordered; it reads SLSQKQQGRLDGFFTVKPGSAPPKRKAEDDKKNVKKKGKK. The interval 340–348 is interaction with PCNA; it reads QQGRLDGFF.

This sequence belongs to the XPG/RAD2 endonuclease family. FEN1 subfamily. Interacts with PCNA. Three molecules of FEN1 bind to one PCNA trimer with each molecule binding to one PCNA monomer. PCNA stimulates the nuclease activity without altering cleavage specificity. It depends on Mg(2+) as a cofactor. In terms of processing, phosphorylated. Phosphorylation upon DNA damage induces relocalization to the nuclear plasma.

Its subcellular location is the nucleus. The protein resides in the nucleolus. It is found in the nucleoplasm. The protein localises to the mitochondrion. Structure-specific nuclease with 5'-flap endonuclease and 5'-3' exonuclease activities involved in DNA replication and repair. During DNA replication, cleaves the 5'-overhanging flap structure that is generated by displacement synthesis when DNA polymerase encounters the 5'-end of a downstream Okazaki fragment. It enters the flap from the 5'-end and then tracks to cleave the flap base, leaving a nick for ligation. Also involved in the long patch base excision repair (LP-BER) pathway, by cleaving within the apurinic/apyrimidinic (AP) site-terminated flap. Acts as a genome stabilization factor that prevents flaps from equilibrating into structures that lead to duplications and deletions. Also possesses 5'-3' exonuclease activity on nicked or gapped double-stranded DNA, and exhibits RNase H activity. Also involved in replication and repair of rDNA and in repairing mitochondrial DNA. The sequence is that of Flap endonuclease 1 from Mycosarcoma maydis (Corn smut fungus).